The following is a 156-amino-acid chain: Small ribosomal subunit protein uS7 (156 aa).

This sequence belongs to the universal ribosomal protein uS7 family. As to quaternary structure, part of the 30S ribosomal subunit. Contacts proteins S9 and S11.

One of the primary rRNA binding proteins, it binds directly to 16S rRNA where it nucleates assembly of the head domain of the 30S subunit. Is located at the subunit interface close to the decoding center, probably blocks exit of the E-site tRNA. The sequence is that of Small ribosomal subunit protein uS7 from Acidithiobacillus ferrooxidans (strain ATCC 53993 / BNL-5-31) (Leptospirillum ferrooxidans (ATCC 53993)).